A 446-amino-acid polypeptide reads, in one-letter code: Keratin, type I cytoskeletal 25 (446 aa).

The disordered stretch occupies residues 1–20 (MSLRLSSGSKRSYARPSTGS). Positions 1–74 (MSLRLSSGSK…VNEGGLLSGN (74 aa)) are head. Positions 75–110 (EKVTMQNLNDRLASYLDNVQALQEANADLEQKIKGW) are coil 1A. Residues 75–390 (EKVTMQNLND…LLIGGDEGAC (316 aa)) form the IF rod domain. The linker 1 stretch occupies residues 111–132 (YEKFGPGSCRGLDHDYSRYFPI). The tract at residues 133 to 224 (IDDLKNQIIT…KNHKEEMQAL (92 aa)) is coil 1B. Residues 225 to 247 (QCAAGGNVNVEMNAAPGVDLTVL) are linker 12. Residues 248–386 (LNNMRAEYEA…ETYCLLIGGD (139 aa)) form a coil 2 region. Residues 387–446 (EGACKSSSYKSKDYTSGNAGNQSKDSPKAIVVKKVLEEVDQRSKILTTRLHSLEEKSQSN) form a tail region. The interval 394–413 (SYKSKDYTSGNAGNQSKDSP) is disordered. The span at 400–410 (YTSGNAGNQSK) shows a compositional bias: polar residues. At S438 the chain carries Phosphoserine.

Belongs to the intermediate filament family. As to quaternary structure, heterodimer of a type I and a type II keratin. Heterodimer with type II keratin KRT5 leading to the formation of keratin intermediate filament (KIF) network. Interacts with KRT6A to form filaments.

Its subcellular location is the cytoplasm. Essential for the proper assembly of type I and type II keratin protein complexes and formation of keratin intermediate filaments in the inner root sheath (irs). Plays a role in the cytoskeleton organization. The polypeptide is Keratin, type I cytoskeletal 25 (Rattus norvegicus (Rat)).